We begin with the raw amino-acid sequence, 1279 residues long: Talin-A (1279 aa).

Residues 84 to 365 form the FERM domain; the sequence is RPQKFKLLDG…GYIEIIMKAR (282 aa).

It is found in the cytoplasm. Its subcellular location is the cytoskeleton. It localises to the cell cortex. Its function is as follows. Actin-binding protein that may be involved in the control of cell motility and chemotaxis. The sequence is that of Talin-A (talA) from Dictyostelium discoideum (Social amoeba).